We begin with the raw amino-acid sequence, 227 residues long: UPF0758 protein lpg2489 (227 aa).

The MPN domain maps to 102-225 (RLSNTQQTYA…YSIFAENKWV (124 aa)). Zn(2+)-binding residues include H173, H175, and D186. The short motif at 173–186 (HNHPSGLSDASQQD) is the JAMM motif element.

It belongs to the UPF0758 family.

The protein is UPF0758 protein lpg2489 of Legionella pneumophila subsp. pneumophila (strain Philadelphia 1 / ATCC 33152 / DSM 7513).